Reading from the N-terminus, the 272-residue chain is DNA repair protein RecO (272 aa).

The protein belongs to the RecO family.

In terms of biological role, involved in DNA repair and RecF pathway recombination. The sequence is that of DNA repair protein RecO from Latilactobacillus sakei subsp. sakei (strain 23K) (Lactobacillus sakei subsp. sakei).